The sequence spans 532 residues: Spore coat protein SP85 (532 aa).

The first 19 residues, 1–19 (MRLLSVLLIGFLCLAGTYA), serve as a signal peptide directing secretion. A glycan (N-linked (GlcNAc...) asparagine) is linked at Asn-47. Residues 197–265 (TQSPTQPPTQ…PTQPPTQPPV (69 aa)) are disordered. Residues 201-263 (TQPPTQPPTY…YPPTQPPTQP (63 aa)) show a composition bias toward pro residues. Positions 267–289 (DCSTLECPEGFHCEIVNNRRTCV) constitute a Follistatin-like 1 domain. The tract at residues 297 to 320 (THPPTQSPTYPPTQPPTQPPTYPP) is disordered. Follistatin-like domains lie at 335–359 (SCDN…ARCV), 400–423 (TCDQ…VFCV), and 430–452 (TCKQ…LHCV).

In terms of assembly, binds to cotE. In terms of processing, O-glycosylated.

It localises to the spore wall. Required for incorporation of cotE into the spore coat and for the formation of the outer layer. Has a cross-bridging function between cellulose and other coat proteins. The protein is Spore coat protein SP85 (pspB) of Dictyostelium discoideum (Social amoeba).